The chain runs to 354 residues: Methylthioribose-1-phosphate isomerase (354 aa).

Residues 58–60, arginine 101, and glutamine 204 each bind substrate; that span reads RGA. The Proton donor role is filled by aspartate 245. 255–256 contributes to the substrate binding site; sequence NK.

Belongs to the eIF-2B alpha/beta/delta subunits family. MtnA subfamily.

It carries out the reaction 5-(methylsulfanyl)-alpha-D-ribose 1-phosphate = 5-(methylsulfanyl)-D-ribulose 1-phosphate. It functions in the pathway amino-acid biosynthesis; L-methionine biosynthesis via salvage pathway; L-methionine from S-methyl-5-thio-alpha-D-ribose 1-phosphate: step 1/6. In terms of biological role, catalyzes the interconversion of methylthioribose-1-phosphate (MTR-1-P) into methylthioribulose-1-phosphate (MTRu-1-P). The protein is Methylthioribose-1-phosphate isomerase of Xanthomonas axonopodis pv. citri (strain 306).